A 380-amino-acid polypeptide reads, in one-letter code: Glutamate 5-kinase (380 aa).

K15 contributes to the ATP binding site. Substrate contacts are provided by S59, D146, and N158. Residue 178-179 participates in ATP binding; that stretch reads TD. Positions 285 to 363 constitute a PUA domain; the sequence is RGSVTVDAGA…AEFERLLGYA (79 aa).

The protein belongs to the glutamate 5-kinase family.

The protein localises to the cytoplasm. The enzyme catalyses L-glutamate + ATP = L-glutamyl 5-phosphate + ADP. Its pathway is amino-acid biosynthesis; L-proline biosynthesis; L-glutamate 5-semialdehyde from L-glutamate: step 1/2. Functionally, catalyzes the transfer of a phosphate group to glutamate to form L-glutamate 5-phosphate. The chain is Glutamate 5-kinase from Acidovorax ebreus (strain TPSY) (Diaphorobacter sp. (strain TPSY)).